The following is a 60-amino-acid chain: Metallothionein A (60 aa).

The interval 1–28 (MDPCQCSKSGTCNCGGSCTCTNCSCKSC) is beta. A divalent metal cation contacts are provided by cysteine 4, cysteine 6, cysteine 12, cysteine 14, cysteine 18, cysteine 20, cysteine 23, cysteine 25, cysteine 28, cysteine 32, cysteine 33, cysteine 35, cysteine 36, cysteine 40, cysteine 43, cysteine 47, cysteine 49, cysteine 54, cysteine 58, and cysteine 59. The tract at residues 29–60 (KKSCCPCCPSGCTKCASGCVCKGKTCDTSCCQ) is alpha.

It belongs to the metallothionein superfamily. Type 1 family.

Metallothioneins have a high content of cysteine residues that bind various heavy metals. The polypeptide is Metallothionein A (mta) (Trematomus bernacchii (Emerald rockcod)).